A 419-amino-acid polypeptide reads, in one-letter code: Acyl-coenzyme A thioesterase 6 (419 aa).

Catalysis depends on charge relay system residues Ser232, Asp324, and His358. The Peroxisome targeting signal motif lies at 417 to 419 (SKL).

Belongs to the C/M/P thioester hydrolase family. Highly expressed in white adipose tissue. Detected at lower levels in kidney, liver, brown adipose tissue and brain.

It is found in the peroxisome. It catalyses the reaction pristanoyl-CoA + H2O = 2,6,10,14-tetramethylpentadecanoate + CoA + H(+). The catalysed reaction is phytanoyl-CoA + H2O = 3,7,11,15-tetramethylhexadecanoate + CoA + H(+). It participates in lipid metabolism; fatty acid metabolism. Functionally, catalyzes the hydrolysis of acyl-CoAs into free fatty acids and coenzyme A (CoASH), regulating their respective intracellular levels. Catalyzes the hydrolysis of phytanoyl-CoA and pristanoyl-CoA, two methyl-branched fatty acids derived from phytol, that enter the body via the diet. The chain is Acyl-coenzyme A thioesterase 6 from Mus musculus (Mouse).